The chain runs to 122 residues: Large ribosomal subunit protein uL18 (122 aa).

The protein belongs to the universal ribosomal protein uL18 family. As to quaternary structure, part of the 50S ribosomal subunit; part of the 5S rRNA/L5/L18/L25 subcomplex. Contacts the 5S and 23S rRNAs.

In terms of biological role, this is one of the proteins that bind and probably mediate the attachment of the 5S RNA into the large ribosomal subunit, where it forms part of the central protuberance. The polypeptide is Large ribosomal subunit protein uL18 (Hydrogenobaculum sp. (strain Y04AAS1)).